We begin with the raw amino-acid sequence, 1901 residues long: Protein TIC 214 (1901 aa).

Helical transmembrane passes span isoleucine 18–glycine 38, phenylalanine 64–leucine 84, proline 87–histidine 107, leucine 124–leucine 144, valine 172–isoleucine 192, and isoleucine 221–isoleucine 241. Disordered stretches follow at residues glutamate 248–tryptophan 299, arginine 797–arginine 817, and isoleucine 1591–valine 1618. Residues valine 256 to threonine 268 are compositionally biased toward acidic residues. Residues isoleucine 1591–asparagine 1611 are compositionally biased toward basic and acidic residues.

Belongs to the TIC214 family. In terms of assembly, part of the Tic complex.

It localises to the plastid. It is found in the chloroplast inner membrane. Functionally, involved in protein precursor import into chloroplasts. May be part of an intermediate translocation complex acting as a protein-conducting channel at the inner envelope. The chain is Protein TIC 214 from Nicotiana sylvestris (Wood tobacco).